Here is a 618-residue protein sequence, read N- to C-terminus: V-type proton ATPase catalytic subunit A (618 aa).

An ATP-binding site is contributed by 251–258 (GAFGCGKT).

It belongs to the ATPase alpha/beta chains family. V-ATPase is a heteromultimeric enzyme composed of a peripheral catalytic V1 complex (main components: subunits A, B, C, D, E, and F) attached to an integral membrane V0 proton pore complex (main component: the proteolipid protein).

It catalyses the reaction ATP + H2O + 4 H(+)(in) = ADP + phosphate + 5 H(+)(out). Catalytic subunit of the peripheral V1 complex of vacuolar ATPase. V-ATPase vacuolar ATPase is responsible for acidifying a variety of intracellular compartments in eukaryotic cells. This Dictyostelium discoideum (Social amoeba) protein is V-type proton ATPase catalytic subunit A (vatA).